A 563-amino-acid chain; its full sequence is Forkhead box protein O (563 aa).

2 disordered regions span residues 1-72 and 177-243; these read MDDF…DPQQ and KSVR…SYQL. Threonine 43 is modified (phosphothreonine; by PKB/AKT1). Polar residues predominate over residues 58 to 72; the sequence is TKASNQQLANGDPQQ. A DNA-binding region (fork-head) is located at residues 90 to 196; that stretch reads WGNLSYADLI…ETSRYEKRRG (107 aa). The residue at position 185 (serine 185) is a Phosphoserine; by PKB/AKT1. Polar residues predominate over residues 216 to 225; sequence ATPSPSSSVS. Serine 253 is subject to Phosphoserine; by PKB/AKT1. Serine 256, serine 257, and serine 262 each carry phosphoserine. The disordered stretch occupies residues 317 to 371; it reads AASGLPTQPPPPYQPPQHPQHTQGYALNGPGLSPNSVTTTMSPAYPNSEPSSDSL. Residues 323–334 show a composition bias toward pro residues; that stretch reads TQPPPPYQPPQH. The segment covering 349–358 has biased composition (polar residues); it reads SPNSVTTTMS.

As to quaternary structure, interacts with melt.

The protein localises to the cytoplasm. It localises to the nucleus. In terms of biological role, transcription factor involved in the regulation of the insulin signaling pathway. Consistently activates both the downstream target Thor\d4EBP and the feedback control target InR. Involved in negative regulation of the cell cycle, modulating cell growth and proliferation. In response to cellular stresses, such as nutrient deprivation or increased levels of reactive oxygen species, foxo is activated and inhibits growth through the action of target genes such as Thor. Foxo activated in the adult fat body can regulate lifespan in adults; an insulin peptide itself may function as one secondary messenger of insulin-regulated aging. Also regulates Lip4, homolog of human acid lipases, thereby acting as a key modulator of lipid metabolism by insulin signaling and integrates insulin responses to glucose and lipid homeostasis. In Drosophila mojavensis (Fruit fly), this protein is Forkhead box protein O.